The following is a 558-amino-acid chain: Alkaline/neutral invertase CINV2 (558 aa).

Residues Ser-16, Ser-19, and Ser-50 each carry the phosphoserine modification. Thr-79 carries the post-translational modification Phosphothreonine. The residue at position 555 (Ser-555) is a Phosphoserine.

This sequence belongs to the glycosyl hydrolase 100 family.

It localises to the cytoplasm. It is found in the cytosol. The enzyme catalyses Hydrolysis of terminal non-reducing beta-D-fructofuranoside residues in beta-D-fructofuranosides.. Cytosolic invertase that may cleave sucrose into glucose and fructose, and that is involved in the regulation of root growth. May regulate sugar-mediated root development by controlling sucrose catabolism in root cells. The polypeptide is Alkaline/neutral invertase CINV2 (Arabidopsis thaliana (Mouse-ear cress)).